Here is a 144-residue protein sequence, read N- to C-terminus: Transcription antitermination protein NusB (144 aa).

Belongs to the NusB family.

Its function is as follows. Involved in transcription antitermination. Required for transcription of ribosomal RNA (rRNA) genes. Binds specifically to the boxA antiterminator sequence of the ribosomal RNA (rrn) operons. This is Transcription antitermination protein NusB from Histophilus somni (strain 2336) (Haemophilus somnus).